The sequence spans 387 residues: Phosphoglycerate kinase (387 aa).

Substrate contacts are provided by residues 21 to 23 (DLN), Arg-36, 59 to 62 (HLGR), Arg-113, and Arg-146. ATP is bound by residues Lys-197, Glu-314, and 340-343 (GGDT).

The protein belongs to the phosphoglycerate kinase family. Monomer.

The protein resides in the cytoplasm. It carries out the reaction (2R)-3-phosphoglycerate + ATP = (2R)-3-phospho-glyceroyl phosphate + ADP. It functions in the pathway carbohydrate degradation; glycolysis; pyruvate from D-glyceraldehyde 3-phosphate: step 2/5. The sequence is that of Phosphoglycerate kinase from Marinomonas sp. (strain MWYL1).